Reading from the N-terminus, the 211-residue chain is Phosphatidylglycerophosphatase C (211 aa).

At 1–33 the chain is on the cytoplasmic side; that stretch reads MATHERRVVFFDLDGTLHQQDMFGSFLRYLLRR. The chain crosses the membrane as a helical span at residues 34 to 54; the sequence is QPLNALLVLPLLPIIAIALLI. Topologically, residues 55–211 are periplasmic; that stretch reads KGRAARWPMS…TPRGELQQLE (157 aa).

The cofactor is Mg(2+).

It localises to the cell inner membrane. The catalysed reaction is a 1,2-diacyl-sn-glycero-3-phospho-(1'-sn-glycero-3'-phosphate) + H2O = a 1,2-diacyl-sn-glycero-3-phospho-(1'-sn-glycerol) + phosphate. It participates in phospholipid metabolism; phosphatidylglycerol biosynthesis; phosphatidylglycerol from CDP-diacylglycerol: step 2/2. Lipid phosphatase which dephosphorylates phosphatidylglycerophosphate (PGP) to phosphatidylglycerol (PG). This chain is Phosphatidylglycerophosphatase C (pgpC), found in Escherichia coli (strain K12).